We begin with the raw amino-acid sequence, 1211 residues long: DNA-directed RNA polymerase subunit beta' (1211 aa).

The Zn(2+) site is built by cysteine 60, cysteine 62, cysteine 75, and cysteine 78. Aspartate 450, aspartate 452, and aspartate 454 together coordinate Mg(2+). Cysteine 819, cysteine 893, cysteine 900, and cysteine 903 together coordinate Zn(2+).

This sequence belongs to the RNA polymerase beta' chain family. The RNAP catalytic core consists of 2 alpha, 1 beta, 1 beta' and 1 omega subunit. When a sigma factor is associated with the core the holoenzyme is formed, which can initiate transcription. Mg(2+) serves as cofactor. The cofactor is Zn(2+).

It carries out the reaction RNA(n) + a ribonucleoside 5'-triphosphate = RNA(n+1) + diphosphate. DNA-dependent RNA polymerase catalyzes the transcription of DNA into RNA using the four ribonucleoside triphosphates as substrates. The polypeptide is DNA-directed RNA polymerase subunit beta' (Streptococcus equi subsp. equi (strain 4047)).